Here is a 917-residue protein sequence, read N- to C-terminus: Auxin response factor 17 (917 aa).

A DNA-binding region (TF-B3) is located at residues 134 to 236 (FCKTLTASDT…QLLLGIRRAN (103 aa)). The segment at 571 to 649 (SVPNALSPFS…RPTAVPVPDP (79 aa)) is disordered. Composition is skewed to low complexity over residues 576 to 594 (LSPF…MTLQ) and 604 to 620 (SYPD…NTST). The region spanning 786–870 (ATFVKVYKSG…SCIKILSPQE (85 aa)) is the PB1 domain.

Belongs to the ARF family. Homodimers and heterodimers. Expressed in roots, culms, leaves and young panicles.

It is found in the nucleus. In terms of biological role, auxin response factors (ARFs) are transcriptional factors that bind specifically to the DNA sequence 5'-TGTCTC-3' found in the auxin-responsive promoter elements (AuxREs). The protein is Auxin response factor 17 (ARF17) of Oryza sativa subsp. japonica (Rice).